Reading from the N-terminus, the 1055-residue chain is SMC5-SMC6 complex localization factor protein 1 (1055 aa).

2 BRCT domains span residues 2 to 80 (EDDA…AQSG) and 121 to 199 (PGAF…LLEK). The tract at residues 312-332 (KKRKKEKERDSRKDIEHDRST) is disordered. Over residues 318 to 332 (KERDSRKDIEHDRST) the composition is skewed to basic and acidic residues. The segment at 407–1055 (PRGILNLIES…VMCRSVTEIS (649 aa)) is NSE5-like domain; mediates interaction with SLF2. ANK repeat units lie at residues 804 to 834 (KGET…DINV), 838 to 867 (AGWT…EVDL), and 872 to 901 (DGVT…PVLL). Residue Lys-929 forms a Glycyl lysine isopeptide (Lys-Gly) (interchain with G-Cter in SUMO2) linkage.

Interacts (via N-terminus) with SLF2; this interaction links RAD18 to the SMC5-SMC6 complex. Interacts (via BRCT domains) with RAD18; this interaction occurs in a SLF2-independent manner. Interacts with SMC6. Interacts (via BRCT domains) with RAD18 (via C-terminus and phosphorylated form); this interaction is required for efficient repair of UV-induced DNA damage.

It localises to the nucleus. The protein resides in the cytoplasm. Its subcellular location is the cytoskeleton. The protein localises to the microtubule organizing center. It is found in the centrosome. Its function is as follows. Plays a role in the DNA damage response (DDR) pathway by regulating postreplication repair of UV-damaged DNA and genomic stability maintenance. The SLF1-SLF2 complex acts to link RAD18 with the SMC5-SMC6 complex at replication-coupled interstrand cross-links (ICL) and DNA double-strand breaks (DSBs) sites on chromatin during DNA repair in response to stalled replication forks. Promotes the recruitment of SLF2 and the SMC5-SMC6 complex to DNA lesions. This Bos taurus (Bovine) protein is SMC5-SMC6 complex localization factor protein 1.